The chain runs to 96 residues: Co-chaperonin GroES (96 aa).

The protein belongs to the GroES chaperonin family. As to quaternary structure, heptamer of 7 subunits arranged in a ring. Interacts with the chaperonin GroEL.

Its subcellular location is the cytoplasm. Its function is as follows. Together with the chaperonin GroEL, plays an essential role in assisting protein folding. The GroEL-GroES system forms a nano-cage that allows encapsulation of the non-native substrate proteins and provides a physical environment optimized to promote and accelerate protein folding. GroES binds to the apical surface of the GroEL ring, thereby capping the opening of the GroEL channel. The protein is Co-chaperonin GroES of Herminiimonas arsenicoxydans.